Reading from the N-terminus, the 654-residue chain is Endoplasmic reticulum chaperone BiP (654 aa).

An N-terminal signal peptide occupies residues 1–18; that stretch reads MKLSLVAAMLLLLSAARA. A required for interaction with ELAPOR1 region spans residues 1–80; that stretch reads MKLSLVAAML…EGERLIGDAA (80 aa). 36–39 contacts ATP; sequence GTTY. A Phosphoserine modification is found at Ser86. Lys96 serves as a coordination point for ATP. Lys125 is modified (N6-acetyllysine). Residues 125-280 form a nucleotide-binding (NBD) region; sequence KPYIQVDIGG…KKKTGKDVRK (156 aa). Tyr160 bears the 3'-nitrotyrosine mark. Lys213 is subject to N6-acetyllysine. 227-229 is an ATP binding site; sequence GGT. Lys271 carries the N6-acetyllysine modification. 293 to 300 serves as a coordination point for ATP; that stretch reads EKAKRALS. Residue Lys326 is modified to N6-acetyllysine. Residue Lys352 forms a Glycyl lysine isopeptide (Lys-Gly) (interchain with G-Cter in SUMO2) linkage. Residue Lys353 is modified to N6-acetyllysine; alternate. A Glycyl lysine isopeptide (Lys-Gly) (interchain with G-Cter in SUMO1); alternate cross-link involves residue Lys353. 364 to 367 contributes to the ATP binding site; sequence GSTR. The segment at 409 to 419 is interdomain linker; it reads QDTGDLVLLDV. A substrate-binding (SBD) region spans residues 420 to 500; sequence CPLTLGIETV…PRGVPQIEVT (81 aa). Lys447 is subject to N6-succinyllysine. Position 492 is an omega-N-methylarginine (Arg492). Thr518 carries the O-AMP-threonine; alternate modification. Residue Thr518 is modified to Phosphothreonine; alternate. Lys585 is modified (N6,N6,N6-trimethyllysine; by METTL21A; in vitro). At Lys585 the chain carries N6,N6-dimethyllysine; alternate. Lys585 carries the post-translational modification N6-methyllysine; alternate. Lys591 is modified (N6-methyllysine). The tract at residues 633 to 654 is disordered; the sequence is KLYGSAGPPPTGEEDTAEKDEL. Thr643 and Thr648 each carry phosphothreonine. Residues 644-654 are compositionally biased toward acidic residues; the sequence is GEEDTAEKDEL. A Prevents secretion from ER motif is present at residues 651–654; sequence KDEL.

Belongs to the heat shock protein 70 family. Monomer and homooligomer; homooligomerization via the interdomain linker inactivates the chaperone activity and acts as a storage of HSPA5/BiP molecules. Interacts with DNAJC1 (via J domain). Component of an EIF2 complex at least composed of CELF1/CUGBP1, CALR, CALR3, EIF2S1, EIF2S2, HSP90B1 and HSPA5. Part of a large chaperone multiprotein complex comprising DNAJB11, HSP90B1, HSPA5, HYOU, PDIA2, PDIA4, PDIA6, PPIB, SDF2L1, UGGT1 and very small amounts of ERP29, but not, or at very low levels, CALR nor CANX. Interacts with TMEM132A and TRIM21. May form a complex with ERLEC1, OS9, SEL1L and SYVN1. Interacts with DNAJC10. Interacts with DNAJB9/ERdj4; leading to recruit HSPA5/BiP to ERN1/IRE1. Interacts with ERN1/IRE1 (via luminal domain); the interaction takes place following interaction with DNAJB9/ERdj4 and leads to inactivate ERN1/IRE1, the interaction also competitively inhibits ERN1 interaction with MANF. Interacts directly with MANF (via SAP domain); the interaction inhibits ATP binding to HSPA5/BiP and subsequent nucleotide exchange. Interacts with EIF2AK3/PERK (via luminal domain); interaction leads to inactivate EIF2AK3/PERK. Interacts with MX1. Interacts with METTL23. Interacts with CEMIP; the interaction induces calcium leakage from the endoplasmic reticulum and cell migration. Interacts with PCSK4 form; the interaction takes place in the endoplasmic reticulum. Interacts with CIPC. Interacts with CCDC88B (via C-terminus); the interaction opposes ERN1-mediated JNK activation, protecting against apoptosis. Interacts with INPP5K; necessary for INPP5K localization at the endoplasmic reticulum. Interacts with MANF; the interaction is direct. Interacts with LOXL2; leading to activate the ERN1/IRE1-XBP1 pathway of the unfolded protein response. Interacts with CLU under stressed condition; interaction increases CLU protein stability; facilitates its retrotranslocation and redistribution to the mitochondria; cooperatively suppress stress-induced apoptosis by stabilizing mitochondrial membrane integrity. Interacts with CCDC47. Interacts with CLN3. Interacts with ELAPOR1; may regulate the function of HSPA5 in apoptosis and cell proliferation. Interacts with CASP7. Interacts with ILDR2; the interaction stabilizes ILDR2 expression. Interacts with ADAM7. As to quaternary structure, (Microbial infection) Interacts with Japanese encephalitis virus envelope protein E. In terms of assembly, (Microbial infection) Interacts with R.delemar invasin CotH3 on the surface of nasal epithelial cells. Interacts with R.delemar invasin CotH2. (Microbial infection) Interacts with Zika virus envelope protein E and non-structural protein 1 in a chaperone-client manner. AMPylated by FICD. In unstressed cells, AMPylation at Thr-518 by FICD inactivates the chaperome activity: AMPylated form is locked in a relatively inert state and only weakly stimulated by J domain-containing proteins. In response to endoplasmic reticulum stress, de-AMPylation by the same protein, FICD, restores the chaperone activity.

Its subcellular location is the endoplasmic reticulum lumen. The protein resides in the melanosome. It is found in the cytoplasm. The protein localises to the cell surface. The catalysed reaction is ATP + H2O = ADP + phosphate + H(+). The chaperone activity is regulated by ATP-induced allosteric coupling of the nucleotide-binding (NBD) and substrate-binding (SBD) domains. In the ADP-bound and nucleotide-free (apo) states, the two domains have little interaction. In contrast, in the ATP-bound state the two domains are tightly coupled, which results in drastically accelerated kinetics in both binding and release of polypeptide substrates. J domain-containing co-chaperones (DNAJB9/ERdj4 or DNAJC10/ERdj5) stimulate the ATPase activity and are required for efficient substrate recognition by HSPA5/BiP. Homooligomerization inactivates participating HSPA5/BiP protomers and probably act as reservoirs to store HSPA5/BiP molecules when they are not needed by the cell. Its function is as follows. Endoplasmic reticulum chaperone that plays a key role in protein folding and quality control in the endoplasmic reticulum lumen. Involved in the correct folding of proteins and degradation of misfolded proteins via its interaction with DNAJC10/ERdj5, probably to facilitate the release of DNAJC10/ERdj5 from its substrate. Acts as a key repressor of the EIF2AK3/PERK and ERN1/IRE1-mediated unfolded protein response (UPR). In the unstressed endoplasmic reticulum, recruited by DNAJB9/ERdj4 to the luminal region of ERN1/IRE1, leading to disrupt the dimerization of ERN1/IRE1, thereby inactivating ERN1/IRE1. Also binds and inactivates EIF2AK3/PERK in unstressed cells. Accumulation of misfolded protein in the endoplasmic reticulum causes release of HSPA5/BiP from ERN1/IRE1 and EIF2AK3/PERK, allowing their homodimerization and subsequent activation. Plays an auxiliary role in post-translational transport of small presecretory proteins across endoplasmic reticulum (ER). May function as an allosteric modulator for SEC61 channel-forming translocon complex, likely cooperating with SEC62 to enable the productive insertion of these precursors into SEC61 channel. Appears to specifically regulate translocation of precursors having inhibitory residues in their mature region that weaken channel gating. May also play a role in apoptosis and cell proliferation. Functionally, (Microbial infection) Plays an important role in viral binding to the host cell membrane and entry for several flaviruses such as Dengue virus, Zika virus and Japanese encephalitis virus. Acts as a component of the cellular receptor for Dengue virus serotype 2/DENV-2 on human liver cells. In terms of biological role, (Microbial infection) Acts as a receptor for CotH proteins expressed by fungi of the order mucorales, the causative agent of mucormycosis, which plays an important role in epithelial cell invasion by the fungi. Acts as a receptor for R.delemar CotH3 in nasal epithelial cells, which may be an early step in rhinoorbital/cerebral mucormycosis (RCM) disease progression. This is Endoplasmic reticulum chaperone BiP from Homo sapiens (Human).